A 632-amino-acid chain; its full sequence is Probable potassium transport system protein Kup 3 (632 aa).

Helical transmembrane passes span 17–37, 60–80, 106–126, 144–164, 175–195, 210–230, 254–274, 292–312, 344–364, 370–390, 401–421, and 426–446; these read LFYL…TSPL, LISL…VLFL, TAIL…DAMI, PSLS…LFVV, FFGP…ISHI, AVSF…AVFL, WFLL…ALVL, ALLP…QAVI, IFVP…VLSF, LATA…IMAF, LPLA…FLGA, and IHDG…IMWT.

This sequence belongs to the HAK/KUP transporter (TC 2.A.72) family.

The protein localises to the cell inner membrane. The catalysed reaction is K(+)(in) + H(+)(in) = K(+)(out) + H(+)(out). In terms of biological role, transport of potassium into the cell. Likely operates as a K(+):H(+) symporter. This chain is Probable potassium transport system protein Kup 3, found in Rhizobium etli (strain ATCC 51251 / DSM 11541 / JCM 21823 / NBRC 15573 / CFN 42).